We begin with the raw amino-acid sequence, 493 residues long: UDP-N-acetylmuramoylalanine--D-glutamate ligase (493 aa).

Position 126–132 (126–132) interacts with ATP; it reads GTNGKTT.

This sequence belongs to the MurCDEF family.

Its subcellular location is the cytoplasm. It carries out the reaction UDP-N-acetyl-alpha-D-muramoyl-L-alanine + D-glutamate + ATP = UDP-N-acetyl-alpha-D-muramoyl-L-alanyl-D-glutamate + ADP + phosphate + H(+). Its pathway is cell wall biogenesis; peptidoglycan biosynthesis. Functionally, cell wall formation. Catalyzes the addition of glutamate to the nucleotide precursor UDP-N-acetylmuramoyl-L-alanine (UMA). The polypeptide is UDP-N-acetylmuramoylalanine--D-glutamate ligase (Mycolicibacterium smegmatis (strain ATCC 700084 / mc(2)155) (Mycobacterium smegmatis)).